The following is a 183-amino-acid chain: Ribosome maturation factor RimM (183 aa).

The 77-residue stretch at 95-171 (DPDEFYDHEL…VVVIDPPEGL (77 aa)) folds into the PRC barrel domain.

It belongs to the RimM family. In terms of assembly, binds ribosomal protein uS19.

Its subcellular location is the cytoplasm. An accessory protein needed during the final step in the assembly of 30S ribosomal subunit, possibly for assembly of the head region. Essential for efficient processing of 16S rRNA. May be needed both before and after RbfA during the maturation of 16S rRNA. It has affinity for free ribosomal 30S subunits but not for 70S ribosomes. The polypeptide is Ribosome maturation factor RimM (Rhodococcus opacus (strain B4)).